The primary structure comprises 288 residues: Quinate/shikimate dehydrogenase (288 aa).

Substrate is bound by residues Lys71 and Asp107. NAD(+) is bound by residues 132–135 (AGGA), 155–158 (NRRD), Lys205, 232–235 (CVYN), and Gly255.

This sequence belongs to the shikimate dehydrogenase family. Homodimer.

It catalyses the reaction L-quinate + NAD(+) = 3-dehydroquinate + NADH + H(+). The enzyme catalyses L-quinate + NADP(+) = 3-dehydroquinate + NADPH + H(+). It carries out the reaction shikimate + NADP(+) = 3-dehydroshikimate + NADPH + H(+). The catalysed reaction is shikimate + NAD(+) = 3-dehydroshikimate + NADH + H(+). The protein operates within metabolic intermediate biosynthesis; chorismate biosynthesis; chorismate from D-erythrose 4-phosphate and phosphoenolpyruvate: step 4/7. Functionally, the actual biological function of YdiB remains unclear, nor is it known whether 3-dehydroshikimate or quinate represents the natural substrate. Catalyzes the reversible NAD-dependent reduction of both 3-dehydroshikimate (DHSA) and 3-dehydroquinate to yield shikimate (SA) and quinate, respectively. It can use both NAD or NADP for catalysis, however it has higher catalytic efficiency with NAD. The polypeptide is Quinate/shikimate dehydrogenase (Escherichia coli O139:H28 (strain E24377A / ETEC)).